A 274-amino-acid polypeptide reads, in one-letter code: uncharacterized protein (274 aa).

Residues M1–A21 form the signal peptide. The chain crosses the membrane as a helical span at residues T249–F266.

It is found in the membrane. This is an uncharacterized protein from Archaeoglobus fulgidus (strain ATCC 49558 / DSM 4304 / JCM 9628 / NBRC 100126 / VC-16).